We begin with the raw amino-acid sequence, 78 residues long: Gas vesicle protein A (78 aa).

Residues 9 to 19 (LAEVLDRVLDK) form an alpha helix 1 region. The tract at residues 23 to 31 (VDVWARISL) is beta-strand 1. Residues 32–34 (VGI) form a beta turn region. The tract at residues 35-43 (EILTVEARV) is beta-strand 2. Residues 48–67 (VDTFLHYAEEIAKIEQAELT) form an alpha helix 2 region.

Belongs to the gas vesicle GvpA family. As to quaternary structure, the gas vesicle shell is 2 nm thick and consists of a single layer of this protein. It forms helical ribs nearly perpendicular to the long axis of the vesicle. Modeled as antiparallel homodimers.

The protein localises to the gas vesicle shell. Gas vesicles are hollow, gas filled proteinaceous nanostructures found in some microorganisms. During planktonic growth they allow positioning of the organism at a favorable depth for light or nutrient acquisition. GvpA forms the protein shell. This gene replaces p-gvpA of H.salinarum very poorly, only about 1% of GVs are formed; the few gas vesicles formed are quite strong with a very high critical collapse pressure (CCP) of 0.213 MPa. Its function is as follows. Expression of a 9.5 kb mc-vac DNA fragment containing 2 divergently transcribed regions (gvpD-gvpE-gvpF-gvpG-gvpH-gvpI-gvpJ-gvpK-gvpL-gvpM and gvpA-gvpC-gvpN-gvpO) allows H.volcanii to produce gas vesicles. This is Gas vesicle protein A from Haloferax mediterranei (strain ATCC 33500 / DSM 1411 / JCM 8866 / NBRC 14739 / NCIMB 2177 / R-4) (Halobacterium mediterranei).